We begin with the raw amino-acid sequence, 423 residues long: Proline racemase A (423 aa).

The signal sequence occupies residues 1 to 31 (MRKSVCPKQKFFFSAFPFFFFFCVFPLISRT). The active-site Proton acceptor is Cys-160. Position 161-162 (161-162 (GH)) interacts with substrate. Residues Asn-213, Asn-266, and Asn-282 are each glycosylated (N-linked (GlcNAc...) asparagine). Substrate is bound at residue Asp-326. The active-site Proton donor is the Cys-330. Substrate is bound at residue 331-332 (GT).

The protein belongs to the proline racemase family. Homodimer.

It is found in the secreted. Its subcellular location is the membrane. The protein localises to the cytoplasm. The catalysed reaction is L-proline = D-proline. Inhibited by maleic acid, iodoacetamide, iodoacetate and, most particularly, pyrrole-2-carboxylic acid. Its function is as follows. Catalyzes the interconversion of L- and D-proline. Secreted isoform 1 contributes to parasite immune evasion by acting as a B-cell mitogen. Probably involved in parasite differentiation and infectivity. In Trypanosoma cruzi (strain CL Brener), this protein is Proline racemase A (PA45-A).